An 852-amino-acid chain; its full sequence is MLISQSWLTRILQTSNPQWSVSAEEFDAGFVRVGFETEGYEAIPETTGPLVIGRVEKIEELTEFKKPIRYCDVNVGQANGTGELQHIICGARNFAEGDNVVIALPGTVLPGPFEISARKTYGKISEGMICSAMEVGLASQQNPGIMTISDADLASANLKVGDDARELLGLQDTIFDVNITPDRGYALSARGLARELASSFDLQFRDPAQDPAAAAMRNDLFAGLPGTDGEVQALKVDEDTKCSKFGMRKVTGIDPQAESPLWLQRELMLCGQRPVNPATDVTNYVMFLLGQPMHAFDADKVTGELHVRLAKKGEKLTTLDDVERTLDPEDVVISDESGIQSLAGVMGGSTSEISEATTNVLFEAAHWDQITVARTCRRHKLSSEASRRFERGTDAAIIEDALDFAVALLVNIAGGQVEEGRTLVGAVPEMPMITIHTSLPGKTAGKIYPDGTTISRLREVGCEVRETGSRDDNGAREIEVTPPTWRPDLTMPADLVEEVLRLEGLEDIPSIVPTAPAGRGYTPRQRMRRNVGQALAWAGYAEILPTPFIANDVFDVWDLPADDPRRLTVKVQNPLESDYACIGTTLLPSMIESLRRNVTRGQRDAALYGVEQVSVPKSAKPFSPMPSVKQRPGAEELQELLDSLPAQPLHVAVVATGNRQLQGTWGEPEAFTAADAIESARVVARAAGVEITVRNAEYLPWHPGRCAEILVGDKVVGHAGELHPQVCERAELPPRTVAMEMNLDALPLEETFPRPVLSAFPAVLQDIAVVVDEATPAQDVEDALRAGAGELLEEIRLFDVYHSESLGEGKRSLTFSLRFRAPDRTLTEEEASKSREAALQFATEKVGAQLRA.

One can recognise a tRNA-binding domain in the interval 44–159 (PETTGPLVIG…DADLASANLK (116 aa)). One can recognise a B5 domain in the interval 428-510 (PEMPMITIHT…RLEGLEDIPS (83 aa)). D488, D494, E497, and E498 together coordinate Mg(2+). The FDX-ACB domain maps to 758-851 (SAFPAVLQDI…ATEKVGAQLR (94 aa)).

This sequence belongs to the phenylalanyl-tRNA synthetase beta subunit family. Type 1 subfamily. In terms of assembly, tetramer of two alpha and two beta subunits. The cofactor is Mg(2+).

The protein resides in the cytoplasm. The catalysed reaction is tRNA(Phe) + L-phenylalanine + ATP = L-phenylalanyl-tRNA(Phe) + AMP + diphosphate + H(+). This Corynebacterium jeikeium (strain K411) protein is Phenylalanine--tRNA ligase beta subunit.